Reading from the N-terminus, the 176-residue chain is Small ribosomal subunit protein uS5 (176 aa).

An S5 DRBM domain is found at 11 to 74 (LSEVLVDVNR…QAAKKRMMKV (64 aa)).

The protein belongs to the universal ribosomal protein uS5 family. Part of the 30S ribosomal subunit. Contacts proteins S4 and S8.

Functionally, with S4 and S12 plays an important role in translational accuracy. Located at the back of the 30S subunit body where it stabilizes the conformation of the head with respect to the body. This Rickettsia peacockii (strain Rustic) protein is Small ribosomal subunit protein uS5.